The primary structure comprises 286 residues: ATP-binding protein ChvD (286 aa).

The 65-residue stretch at 21–85 (KLQDMIDSQN…DLLLLDEPTN (65 aa)) folds into the ABC transporter domain.

It belongs to the ABC transporter superfamily.

In terms of biological role, the induction of virG by growth under acidic conditions and by phosphate starvation, in the absence of plant inducers, is influenced by ChvD. The protein is ATP-binding protein ChvD (chvD) of Rhizobium radiobacter (Agrobacterium tumefaciens).